A 43-amino-acid polypeptide reads, in one-letter code: Protein PsbN (43 aa).

The helical transmembrane segment at 4-24 threads the bilayer; it reads AIVLIISVGAALVAVTGYGIY.

It belongs to the PsbN family.

Its subcellular location is the cellular thylakoid membrane. May play a role in photosystem I and II biogenesis. The protein is Protein PsbN of Trichormus variabilis (strain ATCC 29413 / PCC 7937) (Anabaena variabilis).